The following is a 191-amino-acid chain: MTRIKSAVAAGGRRAPHSARLGSASTRTIGAVLAALLMTHDAGAAEPIIGQASVIDGDTIEIAGERVQLNSVDAPEEWQVCLDERGADYRCGKESASALDAFLSASRPTRCEFAGRDRYGRFVGTCFRADGKDVNRWLIESGNAVDRDTDNKGLYASAQQTAKSNGAGIWRAQPEHACAARVGRVNRKPSC.

The segment at 1 to 21 is disordered; it reads MTRIKSAVAAGGRRAPHSARL.

Its pathway is glycan metabolism; exopolysaccharide biosynthesis. This Rhizobium meliloti (strain 1021) (Ensifer meliloti) protein is Succinoglycan biosynthesis protein ExoI (exoI).